Here is a 919-residue protein sequence, read N- to C-terminus: Kinesin-like protein KIN-UA (919 aa).

The tract at residues 1-68 (MSTTSGTGGV…SGGGGDAGVP (68 aa)) is disordered. Positions 15–51 (GTQRSSLRTQSSASTSSGGQKASVKSKSVLRKSSPAA) are enriched in low complexity. Gly residues predominate over residues 52 to 66 (LGGGSSKSGGGGDAG). A Kinesin motor domain is found at 70 to 412 (RVRVAVRLRP…IMFGQRAMKV (343 aa)). 155–162 (GQTGTGKT) contacts ATP. Residues 286 to 305 (TRDGLSSESNGNSHMTKSLK) form a disordered region. A compositionally biased stretch (polar residues) spans 291–301 (SSESNGNSHMT). The D-BOX signature appears at 382 to 390 (RTSLVITIG). 2 coiled-coil regions span residues 428 to 492 (SRRL…SIKK) and 530 to 621 (ALEE…LEQH). 4 ARM repeats span residues 650-689 (KPPVARLFEQVGLQKILSLLEAEDADVRIHAVKVVANLAA), 691-731 (EANQ…NLAM), 733-773 (ETNQ…NLCG), and 775-814 (DKLQTKLRSEGGIAALLGMVRCGHPDVLAQVARGIANFAK).

Belongs to the TRAFAC class myosin-kinesin ATPase superfamily. Kinesin family. Ungrouped subfamily. As to quaternary structure, interacts (via C-terminus) with NEK5. As to expression, expressed in leaves, guard cells, trichomes, vascular tissues, stele of the root tip region and columella cells. Highest expression detected in guard cells.

It localises to the cytoplasm. It is found in the cytoskeleton. The polypeptide is Kinesin-like protein KIN-UA (Arabidopsis thaliana (Mouse-ear cress)).